Reading from the N-terminus, the 214-residue chain is Thymidylate kinase (214 aa).

Residue 13 to 20 (GPDACGKS) coordinates ATP.

It belongs to the thymidylate kinase family.

It catalyses the reaction dTMP + ATP = dTDP + ADP. Functionally, phosphorylation of dTMP to form dTDP in both de novo and salvage pathways of dTTP synthesis. The chain is Thymidylate kinase from Malacoplasma penetrans (strain HF-2) (Mycoplasma penetrans).